Reading from the N-terminus, the 101-residue chain is Large ribosomal subunit protein uL23 (101 aa).

Belongs to the universal ribosomal protein uL23 family. In terms of assembly, part of the 50S ribosomal subunit. Contacts protein L29, and trigger factor when it is bound to the ribosome.

One of the early assembly proteins it binds 23S rRNA. One of the proteins that surrounds the polypeptide exit tunnel on the outside of the ribosome. Forms the main docking site for trigger factor binding to the ribosome. This Histophilus somni (strain 129Pt) (Haemophilus somnus) protein is Large ribosomal subunit protein uL23.